The chain runs to 1023 residues: Transmembrane protein 132A (1023 aa).

The signal sequence occupies residues 1-35; it reads MCARMAGRTTAAPRGPYGPWLCLLVALALDVVRVD. Residues 36 to 852 lie on the Extracellular side of the membrane; that stretch reads CGQAPLDPVY…VTELELGMYA (817 aa). The disordered stretch occupies residues 212-246; the sequence is AAEGPGGCGSGEENDPGEQALPVGGVELRPADPPQ. The N-linked (GlcNAc...) asparagine glycan is linked to Asn280. Disordered stretches follow at residues 512–533 and 766–839; these read WRVPGPAEGPAEPAAEASDEAE and LPPA…MVPA. Residues 515–527 show a composition bias toward low complexity; sequence PGPAEGPAEPAAE. Position 529 is a phosphoserine; by FAM20C (Ser529). The tract at residues 611 to 916 is binds to HSPA5/GRP78; it reads IEVRSPLSDS…RQLDRQSPGP (306 aa). A confers cellular localization similar to full-length form region spans residues 671 to 1023; it reads LPAPKQEVAL…NYMERIRGSS (353 aa). Positions 778–790 are enriched in low complexity; that stretch reads SSPAWSPPATEAT. The segment covering 809 to 823 has biased composition (basic and acidic residues); it reads GKFERAEEEARKEET. Over residues 824-836 the composition is skewed to acidic residues; sequence EAREEEEEEEEEM. The chain crosses the membrane as a helical span at residues 853-873; that stretch reads LLGVFCVAIFIFLVNGVVFVL. Over 874-1023 the chain is Cytoplasmic; the sequence is RYQRKEPPDS…NYMERIRGSS (150 aa). The disordered stretch occupies residues 905–961; sequence LSRQLDRQSPGPPKGEGSCPCESGGGGEAPTLAPGPPGGTTSSSSTLARKEAGGRRK.

Belongs to the TMEM132 family. Interacts with HSPA5/GRP78.

It localises to the golgi apparatus membrane. Its subcellular location is the endoplasmic reticulum membrane. Functionally, may play a role in embryonic and postnatal development of the brain. Increased resistance to cell death induced by serum starvation in cultured cells. Regulates cAMP-induced GFAP gene expression via STAT3 phosphorylation. This is Transmembrane protein 132A (TMEM132A) from Homo sapiens (Human).